A 561-amino-acid polypeptide reads, in one-letter code: Arginine--tRNA ligase (561 aa).

Residues 129–139 (ANPTGPLHVGH) carry the 'HIGH' region motif.

This sequence belongs to the class-I aminoacyl-tRNA synthetase family. As to quaternary structure, monomer.

Its subcellular location is the cytoplasm. It catalyses the reaction tRNA(Arg) + L-arginine + ATP = L-arginyl-tRNA(Arg) + AMP + diphosphate. The polypeptide is Arginine--tRNA ligase (Bordetella petrii (strain ATCC BAA-461 / DSM 12804 / CCUG 43448)).